The primary structure comprises 228 residues: NAD(P)H-hydrate epimerase (228 aa).

The YjeF N-terminal domain occupies 9–209; the sequence is VRAVERLAHR…LLGLTPAFLA (201 aa). 53–57 is a binding site for (6S)-NADPHX; sequence NNGGD. Asn-54 and Asp-115 together coordinate K(+). (6S)-NADPHX contacts are provided by residues 119 to 125 and Asp-148; that span reads GIGLARP. Ser-151 contacts K(+).

Belongs to the NnrE/AIBP family. Requires K(+) as cofactor.

The catalysed reaction is (6R)-NADHX = (6S)-NADHX. The enzyme catalyses (6R)-NADPHX = (6S)-NADPHX. Functionally, catalyzes the epimerization of the S- and R-forms of NAD(P)HX, a damaged form of NAD(P)H that is a result of enzymatic or heat-dependent hydration. This is a prerequisite for the S-specific NAD(P)H-hydrate dehydratase to allow the repair of both epimers of NAD(P)HX. The polypeptide is NAD(P)H-hydrate epimerase (Bordetella parapertussis (strain 12822 / ATCC BAA-587 / NCTC 13253)).